We begin with the raw amino-acid sequence, 334 residues long: Putative violet-sensitive opsin (334 aa).

Residues 1–29 lie on the Extracellular side of the membrane; it reads MGKYFYLYENISKVGPYDGPQYYLAPTWA. N-linked (GlcNAc...) asparagine glycosylation occurs at Asn10. Residues 30 to 54 form a helical membrane-spanning segment; the sequence is FYLQAAFMGFVFFVGTPLNFVVLLA. The Cytoplasmic segment spans residues 55-66; the sequence is TAKYKKLRVPLN. Residues 67–88 form a helical membrane-spanning segment; the sequence is YILVNITFAGFIFVTFSVSQVF. Topologically, residues 89-106 are extracellular; it reads LASVRGYYFFGQTLCALE. The cysteines at positions 103 and 179 are disulfide-linked. The chain crosses the membrane as a helical span at residues 107–126; the sequence is AAVGAVAGLVTSWSLAVLSF. At 127-145 the chain is on the cytoplasmic side; that stretch reads ERYLVICKPFGAFKFGSNH. Residues 146–168 form a helical membrane-spanning segment; the sequence is ALAAVIFTWFMGVVRCPPFFGWS. The Extracellular segment spans residues 169–194; it reads RYIPEGLGCSCGPDWYTNCEEFSCAS. The helical transmembrane segment at 195–222 threads the bilayer; it reads YSKFLLVTCFICPITIIIFSYSQLLGAL. The Cytoplasmic portion of the chain corresponds to 223–244; it reads RAVAAQQAESASTQKAEKEVSR. The chain crosses the membrane as a helical span at residues 245-272; it reads MIIVMVASFVTCYGPYALTAQYYAYSQD. The Extracellular portion of the chain corresponds to 273–279; sequence ENKDYRL. A helical transmembrane segment spans residues 280–301; that stretch reads VTIPAFFSKSSCVYNPLIYAFM. The residue at position 288 (Lys288) is an N6-(retinylidene)lysine. Residues 302 to 334 lie on the Cytoplasmic side of the membrane; the sequence is NKQFNGCIMEMVFGKKMEEASEVSSKTEVSTDS.

Belongs to the G-protein coupled receptor 1 family. Opsin subfamily. Post-translationally, phosphorylated on some or all of the serine and threonine residues present in the C-terminal region. In terms of tissue distribution, the three color pigments are found in the cone photoreceptor cells.

Its subcellular location is the membrane. Visual pigments are the light-absorbing molecules that mediate vision. They consist of an apoprotein, opsin, covalently linked to cis-retinal. The protein is Putative violet-sensitive opsin of Oryzias latipes (Japanese rice fish).